Here is a 282-residue protein sequence, read N- to C-terminus: Bifunctional protein FolD (282 aa).

NADP(+) contacts are provided by residues 164-166 (GAS), I189, and I230.

Belongs to the tetrahydrofolate dehydrogenase/cyclohydrolase family. In terms of assembly, homodimer.

The catalysed reaction is (6R)-5,10-methylene-5,6,7,8-tetrahydrofolate + NADP(+) = (6R)-5,10-methenyltetrahydrofolate + NADPH. It carries out the reaction (6R)-5,10-methenyltetrahydrofolate + H2O = (6R)-10-formyltetrahydrofolate + H(+). The protein operates within one-carbon metabolism; tetrahydrofolate interconversion. Functionally, catalyzes the oxidation of 5,10-methylenetetrahydrofolate to 5,10-methenyltetrahydrofolate and then the hydrolysis of 5,10-methenyltetrahydrofolate to 10-formyltetrahydrofolate. This is Bifunctional protein FolD from Campylobacter jejuni subsp. jejuni serotype O:6 (strain 81116 / NCTC 11828).